The primary structure comprises 37 residues: Peptide encoded by miPEP164a (37 aa).

Regulatory peptide encoded by the primary transcript (pri-miR164a) of the microRNA miR164a that enhances the accumulation of its corresponding mature miRNA. Acts probably as a transcriptional activator of its corresponding pri-miRNA. The sequence is that of Peptide encoded by miPEP164a from Arabidopsis thaliana (Mouse-ear cress).